The following is a 20-amino-acid chain: FIGLLISAGKAIHDLIRRRH.

H20 is modified (histidine amide).

As to expression, gill.

It localises to the secreted. Has antibacterial activity against Gram-positive bacteria B.subtilis ATCC 6633, L.garvieae ATCC 49156 and S.iniae F-8502, and Gram-negative bacteria E.coli WT-2, V.anguillarum ATCC 19264, V.penaeicida KHA, V.harveyi ATCC 14126, V.vulnificus ATCC 33148, A.salmonicida NCMB 1102 and P.putida ATCC 12633. Has hemolytic activity against human red blood cells. Seems to disrupt the membranes by adopting an alpha helical conformation. May play a significant role in innate host defense. The protein is Chrysophsin-3 of Pagrus major (Red sea bream).